The sequence spans 386 residues: Enamidase (386 aa).

3 residues coordinate Zn(2+): His67, His69, and Glu164. Positions 164, 193, and 220 each coordinate Fe cation. Residue Asp276 coordinates Zn(2+).

In terms of assembly, homotetramer. Dimer of dimers. The cofactor is Fe cation. Zn(2+) serves as cofactor.

The catalysed reaction is 1,4,5,6-tetrahydro-6-oxonicotinate + 2 H2O = 2-formylglutarate + NH4(+). It participates in cofactor degradation; nicotinate degradation; propanoate and pyruvate from 6-hydroxynicotinate: step 2/8. Decyclization of 6-oxo-1,4,5,6-tetrahydronicotinate to form 2-(enamine)glutarate, followed by hydrolysis to form (S)-2-formylglutarate. This Eubacterium barkeri (Clostridium barkeri) protein is Enamidase.